We begin with the raw amino-acid sequence, 564 residues long: Eukaryotic translation initiation factor 3 subunit L (564 aa).

S2 carries the N-acetylserine modification. In terms of domain architecture, PCI spans 331 to 537 (DAIRVFANIL…IHIADTKVAR (207 aa)). K465 and K549 each carry N6-acetyllysine.

The protein belongs to the eIF-3 subunit L family. In terms of assembly, component of the eukaryotic translation initiation factor 3 (eIF-3) complex, which is composed of 13 subunits: EIF3A, EIF3B, EIF3C, EIF3D, EIF3E, EIF3F, EIF3G, EIF3H, EIF3I, EIF3J, EIF3K, EIF3L and EIF3M. The eIF-3 complex appears to include 3 stable modules: module A is composed of EIF3A, EIF3B, EIF3G and EIF3I; module B is composed of EIF3F, EIF3H, and EIF3M; and module C is composed of EIF3C, EIF3D, EIF3E, EIF3K and EIF3L. EIF3C of module C binds EIF3B of module A and EIF3H of module B, thereby linking the three modules. EIF3J is a labile subunit that binds to the eIF-3 complex via EIF3B. The eIF-3 complex interacts with RPS6KB1 under conditions of nutrient depletion. Mitogenic stimulation leads to binding and activation of a complex composed of MTOR and RPTOR, leading to phosphorylation and release of RPS6KB1 and binding of EIF4B to eIF-3. Interacts with RRN3.

The protein resides in the cytoplasm. In terms of biological role, component of the eukaryotic translation initiation factor 3 (eIF-3) complex, which is required for several steps in the initiation of protein synthesis. The eIF-3 complex associates with the 40S ribosome and facilitates the recruitment of eIF-1, eIF-1A, eIF-2:GTP:methionyl-tRNAi and eIF-5 to form the 43S pre-initiation complex (43S PIC). The eIF-3 complex stimulates mRNA recruitment to the 43S PIC and scanning of the mRNA for AUG recognition. The eIF-3 complex is also required for disassembly and recycling of post-termination ribosomal complexes and subsequently prevents premature joining of the 40S and 60S ribosomal subunits prior to initiation. The eIF-3 complex specifically targets and initiates translation of a subset of mRNAs involved in cell proliferation, including cell cycling, differentiation and apoptosis, and uses different modes of RNA stem-loop binding to exert either translational activation or repression. The protein is Eukaryotic translation initiation factor 3 subunit L of Bos taurus (Bovine).